The primary structure comprises 948 residues: Sensor histidine kinase RcsC (948 aa).

The Cytoplasmic portion of the chain corresponds to 1-20; the sequence is MKYLASFRTTLKVSRYLFRA. A helical transmembrane segment spans residues 21 to 41; the sequence is LALLIWLLIAFVSVFYIVNAL. Residues 42-313 lie on the Periplasmic side of the membrane; sequence HQRESEIRQE…PVDLVLERIR (272 aa). A helical transmembrane segment spans residues 314–334; it reads ILILNAILLNVLVGAGLFTLA. Residues 335–948 lie on the Cytoplasmic side of the membrane; the sequence is RMYERRIFIP…YAERVRKTRA (614 aa). The 69-residue stretch at 357–425 folds into the PAS domain; that stretch reads QFNRKIVASA…VLTSNNTNLQ (69 aa). A Histidine kinase domain is found at 476-692; that stretch reads TVSHELRTPL…QFTLRIPLYG (217 aa). The residue at position 479 (His479) is a Phosphohistidine; by autocatalysis. In terms of domain architecture, ABL spans 705–805; sequence AGTCCWLAVR…ARIYSIELDS (101 aa). A Response regulatory domain is found at 826–940; sequence MILVVDDHPI…VLKQTLAVYA (115 aa). Residue Asp875 is modified to 4-aspartylphosphate.

The protein belongs to the RcsC family. As to quaternary structure, interacts with RcsD. In terms of processing, autophosphorylated. Activation probably requires a transfer of a phosphate group from a His in the transmitter domain to an Asp in the receiver domain.

Its subcellular location is the cell inner membrane. It carries out the reaction ATP + protein L-histidine = ADP + protein N-phospho-L-histidine.. Component of the Rcs signaling system, which controls transcription of numerous genes. RcsC functions as a membrane-associated protein kinase that phosphorylates RcsD in response to environmental signals. The phosphoryl group is then transferred to the response regulator RcsB. In Salmonella typhimurium (strain LT2 / SGSC1412 / ATCC 700720), this protein is Sensor histidine kinase RcsC.